We begin with the raw amino-acid sequence, 229 residues long: Interleukin-27 subunit beta (229 aa).

Positions 1 to 20 are cleaved as a signal peptide; that stretch reads MTPQLLLALVLWASCPPCSG. 2 consecutive Fibronectin type-III domains span residues 24–130 and 131–227; these read PPAA…IKPD and PPEG…TMSL. Asparagine 55 and asparagine 105 each carry an N-linked (GlcNAc...) asparagine glycan.

Belongs to the type I cytokine receptor family. Type 3 subfamily. Heterodimer with IL27/IL27A; not disulfide-linked. This heterodimer is known as interleukin IL-27. Heterodimer with IL12A; not disulfide-linked. This heterodimer is known as interleukin IL-35. Interacts with SQSTM1.

The protein localises to the secreted. In terms of biological role, associates with IL27 to form the IL-27 interleukin, a heterodimeric cytokine which functions in innate immunity. IL-27 has pro- and anti-inflammatory properties, that can regulate T-helper cell development, suppress T-cell proliferation, stimulate cytotoxic T-cell activity, induce isotype switching in B-cells, and that has diverse effects on innate immune cells. Among its target cells are CD4 T-helper cells which can differentiate in type 1 effector cells (TH1), type 2 effector cells (TH2) and IL17 producing helper T-cells (TH17). It drives rapid clonal expansion of naive but not memory CD4 T-cells. It also strongly synergizes with IL-12 to trigger interferon-gamma/IFN-gamma production of naive CD4 T-cells, binds to the cytokine receptor WSX-1/TCCR. Another important role of IL-27 is its antitumor activity as well as its antiangiogenic activity with activation of production of antiangiogenic chemokines. This is Interleukin-27 subunit beta (EBI3) from Homo sapiens (Human).